Consider the following 110-residue polypeptide: PHD finger-like domain-containing protein 5A (110 aa).

Ala-2 carries the post-translational modification N-acetylalanine. An N6-acetyllysine modification is found at Lys-3. Cys-11, Cys-23, Cys-26, Cys-30, Cys-33, Cys-46, Cys-49, Cys-58, Cys-61, Cys-72, and Cys-75 together coordinate Zn(2+). An interaction with SF3B1 and SF3B3 region spans residues Ser-35 to Tyr-51. The segment at Glu-79–Arg-82 is interaction with SF3B3. Cys-85 is a Zn(2+) binding site. The residue at position 94 (Ser-94) is a Phosphoserine.

The protein belongs to the PHF5 family. Component of the 17S U2 SnRNP complex, a ribonucleoprotein complex that contains small nuclear RNA (snRNA) U2 and a number of specific proteins. Part of the SF3B subcomplex of the 17S U2 SnRNP complex. SF3B associates with the splicing subcomplex SF3A and a 12S RNA unit to form the U2 small nuclear ribonucleoproteins complex (U2 snRNP). Within the SF3B complex interacts directly with SF3B1 and SF3B3. Component of the minor spliceosome, which splices U12-type introns. Within this complex, interacts with CRIPT. Interacts (via N-terminus) with U2AF1 and SRSF5; acts to bridge the two. Interacts (via C-terminus) with EP400 and DDX1; acts to bridge the two. Interacts with the PAF1 complex (PAF1C) composed of CDC73, PAF1, LEO1, CTR9, RTF1 and SKIC8. Within the PAF1C interacts directly with CDC73 and SKIC8. Interacts with RNA polymerase II. As to expression, expressed in primary spermatocytes (at protein level). Ubiquitously expressed in pre- and postnatal tissues. Highly expressed in pluripotent embryonic stem cells (ESCs) (at protein level) and induced pluripotent stem cells (iPSCs).

It localises to the nucleus. The protein localises to the nucleus speckle. Functionally, component of the 17S U2 SnRNP complex of the spliceosome, a large ribonucleoprotein complex that removes introns from transcribed pre-mRNAs. The 17S U2 SnRNP complex (1) directly participates in early spliceosome assembly and (2) mediates recognition of the intron branch site during pre-mRNA splicing by promoting the selection of the pre-mRNA branch-site adenosine, the nucleophile for the first step of splicing. Within the 17S U2 SnRNP complex, PHF5A is part of the SF3B subcomplex, which is required for 'A' complex assembly formed by the stable binding of U2 snRNP to the branchpoint sequence in pre-mRNA. Sequence independent binding of SF3A and SF3B subcomplexes upstream of the branch site is essential, it may anchor U2 snRNP to the pre-mRNA. Also acts as a component of the minor spliceosome, which is involved in the splicing of U12-type introns in pre-mRNAs. Also involved in elongation by RNA polymerase II as part of the PAF1 complex (PAF1C). PAF1C is required for maintenance of embryonic stem cell (ESC) self-renewal and cellular reprogramming of stem cells. Maintains pluripotency by recruiting and stabilizing PAF1C on pluripotency genes loci, and by regulating the expression of the pluripotency genes. Regulates the deposition of elongation-associated histone modifications, including dimethylated histone H3 'Lys-79' (H3K79me2) and trimethylated histone H3 'Lys-36' (H3K36me3), on PAF1C targets, self-renewal and pluripotency genes. Regulates RNA polymerase II promoter-proximal pause release of the PAF1C targets and self-renewal genes, and the levels of elongating ('Ser-2' phosphorylated) RNA polymerase II in their gene bodies. Regulates muscle specification in adult stem cells by stabilizing PAF1C in chromatin to promote myogenic differentiation. Acts as a transcriptional regulator by binding to the GJA1/Cx43 promoter and enhancing its up-regulation by ESR1/ER-alpha. The polypeptide is PHD finger-like domain-containing protein 5A (Phf5a) (Mus musculus (Mouse)).